The following is a 231-amino-acid chain: Red fluorescent protein eqFP611 (231 aa).

Positions 63–65 (MYG) form a cross-link, 2-iminomethyl-5-imidazolinone (Met-Gly). Y64 is modified ((E)-2,3-didehydrotyrosine).

Belongs to the GFP family. In terms of assembly, monomer. Post-translationally, contains a chromophore consisting of modified amino acid residues. The chromophore is formed by autocatalytic backbone condensation between Xaa-N and Gly-(N+2), oxidation of Tyr-(N+1) to didehydrotyrosine, and formation of a double bond to the alpha-amino nitrogen of residue Xaa-N. Maturation of the chromophore requires nothing other than molecular oxygen.

Pigment protein. This is Red fluorescent protein eqFP611 from Entacmaea quadricolor (Bubble-tip anemone).